We begin with the raw amino-acid sequence, 101 residues long: Small ribosomal subunit protein uS14 (101 aa).

Belongs to the universal ribosomal protein uS14 family. In terms of assembly, part of the 30S ribosomal subunit. Contacts proteins S3 and S10.

Functionally, binds 16S rRNA, required for the assembly of 30S particles and may also be responsible for determining the conformation of the 16S rRNA at the A site. The polypeptide is Small ribosomal subunit protein uS14 (Ruegeria sp. (strain TM1040) (Silicibacter sp.)).